The sequence spans 175 residues: uncharacterized protein (175 aa).

2 disordered regions span residues 68–112 and 153–175; these read NKNN…DQPY and PEKA…KLTT. Over residues 94–105 the composition is skewed to low complexity; it reads DEQPMMPYQQPP.

It belongs to the asfivirus H171R family.

It is found in the virion. This is an uncharacterized protein from African swine fever virus (isolate Tick/Malawi/Lil 20-1/1983) (ASFV).